Here is a 122-residue protein sequence, read N- to C-terminus: Large-conductance mechanosensitive channel (122 aa).

The next 2 membrane-spanning stretches (helical) occupy residues 29–49 (FGKI…GLIF) and 66–86 (GVFI…FLFI).

The protein belongs to the MscL family. In terms of assembly, homopentamer.

The protein localises to the cell membrane. Functionally, channel that opens in response to stretch forces in the membrane lipid bilayer. May participate in the regulation of osmotic pressure changes within the cell. The protein is Large-conductance mechanosensitive channel of Macrococcus caseolyticus (strain JCSC5402) (Macrococcoides caseolyticum).